Here is a 507-residue protein sequence, read N- to C-terminus: ATP synthase subunit alpha, chloroplastic (507 aa).

170–177 (GDRQTGKT) contributes to the ATP binding site.

It belongs to the ATPase alpha/beta chains family. In terms of assembly, F-type ATPases have 2 components, CF(1) - the catalytic core - and CF(0) - the membrane proton channel. CF(1) has five subunits: alpha(3), beta(3), gamma(1), delta(1), epsilon(1). CF(0) has four main subunits: a, b, b' and c.

It is found in the plastid. Its subcellular location is the chloroplast thylakoid membrane. The enzyme catalyses ATP + H2O + 4 H(+)(in) = ADP + phosphate + 5 H(+)(out). In terms of biological role, produces ATP from ADP in the presence of a proton gradient across the membrane. The alpha chain is a regulatory subunit. This Acorus calamus var. americanus (American sweet flag) protein is ATP synthase subunit alpha, chloroplastic.